We begin with the raw amino-acid sequence, 136 residues long: Ribosome-binding factor A (136 aa).

It belongs to the RbfA family. In terms of assembly, monomer. Binds 30S ribosomal subunits, but not 50S ribosomal subunits or 70S ribosomes.

It localises to the cytoplasm. In terms of biological role, one of several proteins that assist in the late maturation steps of the functional core of the 30S ribosomal subunit. Associates with free 30S ribosomal subunits (but not with 30S subunits that are part of 70S ribosomes or polysomes). Required for efficient processing of 16S rRNA. May interact with the 5'-terminal helix region of 16S rRNA. The polypeptide is Ribosome-binding factor A (Serratia proteamaculans (strain 568)).